Here is a 338-residue protein sequence, read N- to C-terminus: Tagatose 1,6-diphosphate aldolase (338 aa).

This sequence belongs to the aldolase LacD family.

It carries out the reaction D-tagatofuranose 1,6-bisphosphate = D-glyceraldehyde 3-phosphate + dihydroxyacetone phosphate. It functions in the pathway carbohydrate metabolism; D-tagatose 6-phosphate degradation; D-glyceraldehyde 3-phosphate and glycerone phosphate from D-tagatose 6-phosphate: step 2/2. In Listeria innocua serovar 6a (strain ATCC BAA-680 / CLIP 11262), this protein is Tagatose 1,6-diphosphate aldolase.